The following is a 208-amino-acid chain: Large ribosomal subunit protein uL3 (208 aa).

The disordered stretch occupies residues 116-148 (GFQGVIKRHGQSRGPMAHGSRYHRRPGSMGPVA).

This sequence belongs to the universal ribosomal protein uL3 family. As to quaternary structure, part of the 50S ribosomal subunit. Forms a cluster with proteins L14 and L19.

One of the primary rRNA binding proteins, it binds directly near the 3'-end of the 23S rRNA, where it nucleates assembly of the 50S subunit. The chain is Large ribosomal subunit protein uL3 from Streptococcus pyogenes serotype M12 (strain MGAS2096).